The following is a 231-amino-acid chain: Chromosome partition protein MukE (231 aa).

Residues 195–231 form a disordered region; it reads MIRDGEAMPVEGSLSLKDDSDDNDRTDDTAPETGEDE. Acidic residues predominate over residues 213-231; it reads DSDDNDRTDDTAPETGEDE.

It belongs to the MukE family. As to quaternary structure, interacts, and probably forms a ternary complex, with MukF and MukB. The complex formation is stimulated by calcium or magnesium.

It is found in the cytoplasm. Its subcellular location is the nucleoid. Functionally, involved in chromosome condensation, segregation and cell cycle progression. May participate in facilitating chromosome segregation by condensation DNA from both sides of a centrally located replisome during cell division. Probably acts via its interaction with MukB and MukF. The chain is Chromosome partition protein MukE from Pectobacterium atrosepticum (strain SCRI 1043 / ATCC BAA-672) (Erwinia carotovora subsp. atroseptica).